Consider the following 158-residue polypeptide: Frataxin homolog, mitochondrial (158 aa).

It belongs to the frataxin family. In terms of assembly, monomer. Oligomer.

The protein localises to the mitochondrion. The catalysed reaction is 4 Fe(2+) + O2 + 4 H(+) = 4 Fe(3+) + 2 H2O. Its function is as follows. Promotes the biosynthesis of heme as well as the assembly and repair of iron-sulfur clusters by delivering Fe(2+) to proteins involved in these pathways. May play a role in the protection against iron-catalyzed oxidative stress through its ability to catalyze the oxidation of Fe(2+) to Fe(3+). May be able to store large amounts of the metal in the form of a ferrihydrite mineral by oligomerization. The protein is Frataxin homolog, mitochondrial of Schizosaccharomyces pombe (strain 972 / ATCC 24843) (Fission yeast).